Reading from the N-terminus, the 134-residue chain is MLINTEAVNEYLSFFMFIFFSLGLCFFMLCLSWILGGRSSSRYKNTPFESGIVSSGNTNLYFSVKFYLIAMFFVVFDVEALYLYAWSVSIKESGWIGFSEALMFGISLLLGLFYLVRIRALNWSSSVKNNIQLF.

A run of 3 helical transmembrane segments spans residues 14-34 (FFMF…LSWI), 66-86 (FYLI…LYAW), and 96-116 (IGFS…FYLV).

This sequence belongs to the complex I subunit 3 family. In terms of assembly, NDH-1 is composed of 13 different subunits. Subunits NuoA, H, J, K, L, M, N constitute the membrane sector of the complex.

It is found in the cell membrane. It catalyses the reaction a quinone + NADH + 5 H(+)(in) = a quinol + NAD(+) + 4 H(+)(out). NDH-1 shuttles electrons from NADH, via FMN and iron-sulfur (Fe-S) centers, to quinones in the respiratory chain. The immediate electron acceptor for the enzyme in this species is believed to be ubiquinone. Couples the redox reaction to proton translocation (for every two electrons transferred, four hydrogen ions are translocated across the cytoplasmic membrane), and thus conserves the redox energy in a proton gradient. The chain is NADH-quinone oxidoreductase subunit A from Buchnera aphidicola subsp. Acyrthosiphon pisum (strain APS) (Acyrthosiphon pisum symbiotic bacterium).